The following is a 367-amino-acid chain: Protein SGT1 homolog (367 aa).

TPR repeat units lie at residues 6–39, 40–73, and 75–107; these read ASDLESKAKAAFVDDDFELAAELYTQAIEASPAT, AELYADRAQAHIKLGNYTEAVADANKAIELDPSM, and KAYLRKGAACIRLEEYQTAKAALELGYSFASGD. The CS domain occupies 165 to 254; the sequence is KPKYRHDFYN…AEQITWTSLD (90 aa). Disordered stretches follow at residues 261-289 and 347-367; these read AVPQKIIPPAESAQRPSYPSSKSKKDWDK and VGSKKVEGSPPDGMELKKWEY. The SGS domain maps to 277-367; it reads SYPSSKSKKD…DGMELKKWEY (91 aa).

This sequence belongs to the SGT1 family. As to quaternary structure, interacts (via CS domain) with RAR1 (via CHORD 2 domain). Interacts with RAD6. Expressed in roots, root tips, shoot apical meristem (SAM), young leaves, flag leaves and ears.

It localises to the cytoplasm. It is found in the nucleus. Functionally, involved in basal disease resistance to bacterial blight (X.oryzae). May act as positive regulator of basal defense. Probably required for SCF-mediated ubiquitination, by coupling HSP90 to SCF complex for ubiquitination of HSP90 client proteins. This is Protein SGT1 homolog from Oryza sativa subsp. japonica (Rice).